The sequence spans 335 residues: Biotin synthase (335 aa).

The Radical SAM core domain occupies 43-269 (YFGKKVKLNM…INPTKEIRIA (227 aa)). Positions 61, 65, and 68 each coordinate [4Fe-4S] cluster. Positions 104, 137, 197, and 267 each coordinate [2Fe-2S] cluster.

Belongs to the radical SAM superfamily. Biotin synthase family. In terms of assembly, homodimer. It depends on [4Fe-4S] cluster as a cofactor. [2Fe-2S] cluster is required as a cofactor.

It catalyses the reaction (4R,5S)-dethiobiotin + (sulfur carrier)-SH + 2 reduced [2Fe-2S]-[ferredoxin] + 2 S-adenosyl-L-methionine = (sulfur carrier)-H + biotin + 2 5'-deoxyadenosine + 2 L-methionine + 2 oxidized [2Fe-2S]-[ferredoxin]. It participates in cofactor biosynthesis; biotin biosynthesis; biotin from 7,8-diaminononanoate: step 2/2. Functionally, catalyzes the conversion of dethiobiotin (DTB) to biotin by the insertion of a sulfur atom into dethiobiotin via a radical-based mechanism. In Staphylococcus aureus (strain USA300), this protein is Biotin synthase.